A 266-amino-acid chain; its full sequence is Glutamate racemase (266 aa).

Substrate-binding positions include aspartate 9 to serine 10 and tyrosine 41 to glycine 42. Cysteine 72 acts as the Proton donor/acceptor in catalysis. A substrate-binding site is contributed by asparagine 73 to threonine 74. Cysteine 184 serves as the catalytic Proton donor/acceptor. Threonine 185–histidine 186 provides a ligand contact to substrate.

The protein belongs to the aspartate/glutamate racemases family.

It carries out the reaction L-glutamate = D-glutamate. The protein operates within cell wall biogenesis; peptidoglycan biosynthesis. Its function is as follows. Provides the (R)-glutamate required for cell wall biosynthesis. The chain is Glutamate racemase from Staphylococcus aureus (strain Mu3 / ATCC 700698).